The chain runs to 162 residues: Peroxiredoxin-2D (162 aa).

Residues 4–162 (ITVGDVVPDG…SSAEDILKAL (159 aa)) form the Thioredoxin domain. Cysteine 51 (cysteine sulfenic acid (-SOH) intermediate) is an active-site residue.

It belongs to the peroxiredoxin family. Prx5 subfamily. Monomer. As to expression, exclusively expressed in buds and flowers. Also detected in pollen.

Its subcellular location is the cytoplasm. The catalysed reaction is [glutaredoxin]-dithiol + a hydroperoxide = [glutaredoxin]-disulfide + an alcohol + H2O. Functionally, thiol-specific peroxidase that catalyzes the reduction of hydrogen peroxide and organic hydroperoxides to water and alcohols, respectively. Plays a role in cell protection against oxidative stress by detoxifying peroxides. May be involved in intracellular redox signaling. In Arabidopsis thaliana (Mouse-ear cress), this protein is Peroxiredoxin-2D (PRXIID).